We begin with the raw amino-acid sequence, 135 residues long: uncharacterized protein (135 aa).

The next 3 membrane-spanning stretches (helical) occupy residues 13–35 (AKVIRYFTLAGLILLVVSSAMYL), 82–101 (VAVFSLFFLALAPVFALLSI), and 108–130 (IYRILTILVVAELLFGAVRPLIL).

It localises to the cell membrane. This is an uncharacterized protein from Archaeoglobus fulgidus (strain ATCC 49558 / DSM 4304 / JCM 9628 / NBRC 100126 / VC-16).